Consider the following 271-residue polypeptide: Tryptophan synthase alpha chain (271 aa).

Active-site proton acceptor residues include Glu49 and Asp60.

This sequence belongs to the TrpA family. As to quaternary structure, tetramer of two alpha and two beta chains.

The catalysed reaction is (1S,2R)-1-C-(indol-3-yl)glycerol 3-phosphate + L-serine = D-glyceraldehyde 3-phosphate + L-tryptophan + H2O. It participates in amino-acid biosynthesis; L-tryptophan biosynthesis; L-tryptophan from chorismate: step 5/5. Its function is as follows. The alpha subunit is responsible for the aldol cleavage of indoleglycerol phosphate to indole and glyceraldehyde 3-phosphate. This chain is Tryptophan synthase alpha chain, found in Azoarcus sp. (strain BH72).